We begin with the raw amino-acid sequence, 669 residues long: DNA mismatch repair protein MutL (669 aa).

Residues 356–382 (FEQRQNTENNQEKTFSSEESNSKPFME) are disordered. Polar residues predominate over residues 361–378 (NTENNQEKTFSSEESNSK).

This sequence belongs to the DNA mismatch repair MutL/HexB family.

In terms of biological role, this protein is involved in the repair of mismatches in DNA. It is required for dam-dependent methyl-directed DNA mismatch repair. May act as a 'molecular matchmaker', a protein that promotes the formation of a stable complex between two or more DNA-binding proteins in an ATP-dependent manner without itself being part of a final effector complex. In Staphylococcus aureus (strain USA300), this protein is DNA mismatch repair protein MutL.